The primary structure comprises 190 residues: 3-isopropylmalate dehydratase small subunit (190 aa).

It belongs to the LeuD family. LeuD type 1 subfamily. As to quaternary structure, heterodimer of LeuC and LeuD.

It catalyses the reaction (2R,3S)-3-isopropylmalate = (2S)-2-isopropylmalate. The protein operates within amino-acid biosynthesis; L-leucine biosynthesis; L-leucine from 3-methyl-2-oxobutanoate: step 2/4. In terms of biological role, catalyzes the isomerization between 2-isopropylmalate and 3-isopropylmalate, via the formation of 2-isopropylmaleate. The sequence is that of 3-isopropylmalate dehydratase small subunit from Staphylococcus aureus (strain JH1).